A 178-amino-acid polypeptide reads, in one-letter code: Caveolin-1 (178 aa).

N-acetylserine is present on serine 2. Residue serine 2 is modified to Phosphoserine. The required for homooligomerization stretch occupies residues 2 to 94 (SGGKYVDSEG…WKASFTTFTV (93 aa)). Residues 2–104 (SGGKYVDSEG…TKYWFYRLLS (103 aa)) lie on the Cytoplasmic side of the membrane. Lysine 5 carries the N6-acetyllysine; alternate modification. A Glycyl lysine isopeptide (Lys-Gly) (interchain with G-Cter in ubiquitin); alternate cross-link involves residue lysine 5. Tyrosine 6 carries the phosphotyrosine modification. At serine 9 the chain carries Phosphoserine. Phosphotyrosine; by ABL1 is present on tyrosine 14. Phosphotyrosine is present on tyrosine 25. Glycyl lysine isopeptide (Lys-Gly) (interchain with G-Cter in ubiquitin) cross-links involve residues lysine 26, lysine 30, lysine 39, lysine 47, and lysine 57. The tract at residues 82-94 (DGIWKASFTTFTV) is interaction with CAVIN3. The helical intramembrane region spans 105-125 (ALFGIPMALIWGIYFAILSFL). At 126–178 (HIWAVVPCIKSFLIEIQCISRVYSIYVHTFCDPLFEAIGKIFSNIRINMQKEI) the chain is on the cytoplasmic side. Residues 131–142 (VPCIKSFLIEIQ) are interacts with SPRY1, SPRY2, SPRY3 and SPRY4. 3 S-palmitoyl cysteine lipidation sites follow: cysteine 133, cysteine 143, and cysteine 156. Positions 149 to 160 (SIYVHTFCDPLF) are interacts with SPRY1, SPRY2, and SPRY4. The segment at 167–178 (FSNIRINMQKEI) is interacts with SPRY1, SPRY2, SPRY3 and SPRY4.

This sequence belongs to the caveolin family. Homooligomer. Interacts (via the N-terminus) with DPP4; the interaction is direct. Forms a stable heterooligomeric complex with CAV2 that targets to lipid rafts and drives caveolae formation. Interacts with PACSIN2; this interaction induces membrane tubulation. Interacts with BMX, BTK, CTNNB1, CDH1, GLIPR2, JUP, NOSTRIN, SNAP25 and STX1A. Interacts with SLC7A9. Interacts with TGFBR1. Interacts with CAVIN3 (via leucine-zipper domain) in a cholesterol-sensitive manner. Interacts with CAVIN1. Interacts with EHD2 in a cholesterol-dependent manner. Forms a ternary complex with UBXN6 and VCP; mediates CAV1 targeting to lysosomes for degradation. Interacts with ABCG1; this interaction regulates ABCG1-mediated cholesterol efflux. Interacts with NEU3; this interaction enhances NEU3 sialidase activity within caveola. Interacts (via C-terminus) with SPRY1, SPRY2 (via C-terminus), SPRY3, and SPRY4. Phosphorylated at Tyr-14 by ABL1 in response to oxidative stress. Post-translationally, ubiquitinated. Undergo monoubiquitination and multi- and/or polyubiquitination. Monoubiquitination of N-terminal lysines promotes integration in a ternary complex with UBXN6 and VCP which promotes oligomeric CAV1 targeting to lysosomes for degradation. Ubiquitinated by ZNRF1; leading to degradation and modulation of the TLR4-mediated immune response.

It is found in the golgi apparatus membrane. It localises to the cell membrane. The protein resides in the membrane. The protein localises to the caveola. Its subcellular location is the membrane raft. In terms of biological role, may act as a scaffolding protein within caveolar membranes. Forms a stable heterooligomeric complex with CAV2 that targets to lipid rafts and drives caveolae formation. Mediates the recruitment of CAVIN proteins (CAVIN1/2/3/4) to the caveolae. Interacts directly with G-protein alpha subunits and can functionally regulate their activity. Involved in the costimulatory signal essential for T-cell receptor (TCR)-mediated T-cell activation. Its binding to DPP4 induces T-cell proliferation and NF-kappa-B activation in a T-cell receptor/CD3-dependent manner. Recruits CTNNB1 to caveolar membranes and may regulate CTNNB1-mediated signaling through the Wnt pathway. Negatively regulates TGFB1-mediated activation of SMAD2/3 by mediating the internalization of TGFBR1 from membrane rafts leading to its subsequent degradation. Binds 20(S)-hydroxycholesterol (20(S)-OHC). This Otolemur garnettii (Small-eared galago) protein is Caveolin-1 (CAV1).